Consider the following 234-residue polypeptide: 7-carboxy-7-deazaguanine synthase (234 aa).

The segment at 1–28 is disordered; it reads MPLNCDTKTAGEISSSIPSGSGSHQPAA. A compositionally biased stretch (low complexity) spans 13–23; it reads ISSSIPSGSGS. Residues 42 to 44 and arginine 57 contribute to the substrate site; that span reads LQG. In terms of domain architecture, Radical SAM core spans 48–234; the sequence is TSGYPTIFIR…LQLHKFIGLP (187 aa). The [4Fe-4S] cluster site is built by cysteine 61, cysteine 65, and cysteine 68. Threonine 70 provides a ligand contact to Mg(2+). Threonine 100 is a binding site for substrate. Glycine 102 contributes to the S-adenosyl-L-methionine binding site. Proline 234 lines the substrate pocket.

The protein belongs to the radical SAM superfamily. 7-carboxy-7-deazaguanine synthase family. In terms of assembly, homodimer. It depends on [4Fe-4S] cluster as a cofactor. S-adenosyl-L-methionine is required as a cofactor. Mg(2+) serves as cofactor.

It catalyses the reaction 6-carboxy-5,6,7,8-tetrahydropterin + H(+) = 7-carboxy-7-deazaguanine + NH4(+). Its pathway is purine metabolism; 7-cyano-7-deazaguanine biosynthesis. Catalyzes the complex heterocyclic radical-mediated conversion of 6-carboxy-5,6,7,8-tetrahydropterin (CPH4) to 7-carboxy-7-deazaguanine (CDG), a step common to the biosynthetic pathways of all 7-deazapurine-containing compounds. The sequence is that of 7-carboxy-7-deazaguanine synthase from Methanospirillum hungatei JF-1 (strain ATCC 27890 / DSM 864 / NBRC 100397 / JF-1).